Consider the following 614-residue polypeptide: ETS-related transcription factor Elf-1 (614 aa).

Phosphoserine occurs at positions 110, 163, 167, and 168. Positions 159 to 199 (TYAHSPGPSSPEQPKRKKGRKTKPPRPDSPTTTPNISVKKK) are disordered. The segment covering 173–182 (KRKKGRKTKP) has biased composition (basic residues). Ser187 is subject to Phosphoserine. At Thr190 the chain carries Phosphothreonine. The ETS DNA-binding region spans 208–290 (IYLWEFLLAL…EGQRLVYQFK (83 aa)). A disordered region spans residues 303-371 (DPSCSIESSD…VQPSEALRTV (69 aa)). Low complexity predominate over residues 310 to 335 (SSDPSLSSTATSSRNPASRSRASSSP). Ser430 is modified (phosphoserine).

Belongs to the ETS family. Binds to the underphosphorylated form of RB. May interact with other transcription factors in order to regulate specific genes. Interacts with RUNX1.

The protein localises to the nucleus. Its function is as follows. Transcription factor that activates the LYN and BLK promoters. The protein is ETS-related transcription factor Elf-1 (ELF1) of Bos taurus (Bovine).